A 313-amino-acid polypeptide reads, in one-letter code: ADP-L-glycero-D-manno-heptose-6-epimerase (313 aa).

NADP(+)-binding positions include Met-10–Ile-11, Asp-31–Asn-32, Lys-38, Lys-53, Glu-75–Ser-79, and Asn-92. The Proton acceptor role is filled by Tyr-139. Lys-143 serves as a coordination point for NADP(+). Substrate is bound at residue Asn-174. Residues Val-175 and Lys-183 each coordinate NADP(+). The active-site Proton acceptor is the Lys-183. Residues Ser-185, His-192, Phe-206–Ser-209, Arg-214, and Tyr-277 contribute to the substrate site.

This sequence belongs to the NAD(P)-dependent epimerase/dehydratase family. HldD subfamily. In terms of assembly, homopentamer. It depends on NADP(+) as a cofactor.

It carries out the reaction ADP-D-glycero-beta-D-manno-heptose = ADP-L-glycero-beta-D-manno-heptose. Its pathway is nucleotide-sugar biosynthesis; ADP-L-glycero-beta-D-manno-heptose biosynthesis; ADP-L-glycero-beta-D-manno-heptose from D-glycero-beta-D-manno-heptose 7-phosphate: step 4/4. Its function is as follows. Catalyzes the interconversion between ADP-D-glycero-beta-D-manno-heptose and ADP-L-glycero-beta-D-manno-heptose via an epimerization at carbon 6 of the heptose. This is ADP-L-glycero-D-manno-heptose-6-epimerase from Aliivibrio fischeri (strain MJ11) (Vibrio fischeri).